The primary structure comprises 257 residues: Nuclear receptor subfamily 0 group B member 2 (257 aa).

The 242-residue stretch at 16–257 (SRPAILYALL…GLLGDMLLLR (242 aa)) folds into the NR LBD domain. Arginine 57 carries the symmetric dimethylarginine; by PRMT5 modification.

The protein belongs to the nuclear hormone receptor family. NR0 subfamily. As to quaternary structure, interacts (via N-terminus) with NEUROD1 (via N-terminus and C-terminus). Interacts with ID2. Interacts with RORG, NFIL3, NR1D1 and BHLHE41. Heterodimer; efficient DNA binding requires dimerization with another bHLH protein. Interacts with RARA, RXRA, THRB, NR5A1, NR5A2, NR1I3, PPARA, PPARG and EID1. Interacts with HNF4A; the resulting heterodimer is transcriptionally inactive. Interacts with DDX3X; this interaction disrupts the interaction between HNF4 and NR0B2/SHP that forms inactive heterodimers and enhances the formation of active HNF4 homodimers. Post-translationally, arginine methylation by PRMT5 enhances repression activity of metabolic genes in liver in response to bile acid signaling, by increasing interaction with cofactors. Liver. Low levels of expression were detected in heart and pancreas.

It localises to the nucleus. The protein localises to the cytoplasm. Functionally, transcriptional regulator that acts as a negative regulator of receptor-dependent signaling pathways. Specifically inhibits transactivation of the nuclear receptor with which it interacts. Inhibits transcriptional activity of NEUROD1 on E-box-containing promoter by interfering with the coactivation function of the p300/CBP-mediated transcription complex for NEUROD1. Essential component of the liver circadian clock which via its interaction with NR1D1 and RORG regulates NPAS2-mediated hepatic lipid metabolism. Regulates the circadian expression of cytochrome P450 (CYP) enzymes. Represses: NR5A2 and HNF4A to down-regulate CYP2C38, NFLI3 to up-regulate CYP2A5, BHLHE41/HNF1A axis to up-regulate CYP1A2, CYP2E1 and CYP3A11, and NR1D1 to up-regulate CYP2B10, CYP4A10 and CYP4A14. This is Nuclear receptor subfamily 0 group B member 2 (NR0B2) from Homo sapiens (Human).